The primary structure comprises 226 residues: UPF0319 protein SO_1816 (226 aa).

The signal sequence occupies residues 1–21 (MKSLLPISSLLVLLGSASVSA).

This sequence belongs to the UPF0319 family.

In Shewanella oneidensis (strain ATCC 700550 / JCM 31522 / CIP 106686 / LMG 19005 / NCIMB 14063 / MR-1), this protein is UPF0319 protein SO_1816.